The sequence spans 713 residues: Polyribonucleotide nucleotidyltransferase (713 aa).

The Mg(2+) site is built by aspartate 494 and aspartate 500. The 63-residue stretch at 561 to 623 folds into the KH domain; it reads PSFSTMTIPK…EAVQSAEKRV (63 aa). The S1 motif domain maps to 633 to 702; that stretch reads GDVYQGTVKS…KSGKYKLSRK (70 aa).

The protein belongs to the polyribonucleotide nucleotidyltransferase family. Mg(2+) serves as cofactor.

It is found in the cytoplasm. It carries out the reaction RNA(n+1) + phosphate = RNA(n) + a ribonucleoside 5'-diphosphate. Its function is as follows. Involved in mRNA degradation. Catalyzes the phosphorolysis of single-stranded polyribonucleotides processively in the 3'- to 5'-direction. The chain is Polyribonucleotide nucleotidyltransferase from Amoebophilus asiaticus (strain 5a2).